We begin with the raw amino-acid sequence, 482 residues long: Ribulose bisphosphate carboxylase large chain (482 aa).

A propeptide spanning residues 1 to 2 (MS) is cleaved from the precursor. Proline 3 is subject to N-acetylproline. Lysine 14 is subject to N6,N6,N6-trimethyllysine. Positions 123 and 173 each coordinate substrate. Lysine 175 functions as the Proton acceptor in the catalytic mechanism. Substrate is bound at residue lysine 177. Lysine 201, aspartate 203, and glutamate 204 together coordinate Mg(2+). Residue lysine 201 is modified to N6-carboxylysine. Histidine 294 functions as the Proton acceptor in the catalytic mechanism. Residues arginine 295, histidine 327, and serine 379 each coordinate substrate.

It belongs to the RuBisCO large chain family. Type I subfamily. As to quaternary structure, heterohexadecamer of 8 large chains and 8 small chains; disulfide-linked. The disulfide link is formed within the large subunit homodimers. The cofactor is Mg(2+). The disulfide bond which can form in the large chain dimeric partners within the hexadecamer appears to be associated with oxidative stress and protein turnover.

It is found in the plastid. It localises to the chloroplast. It carries out the reaction 2 (2R)-3-phosphoglycerate + 2 H(+) = D-ribulose 1,5-bisphosphate + CO2 + H2O. The enzyme catalyses D-ribulose 1,5-bisphosphate + O2 = 2-phosphoglycolate + (2R)-3-phosphoglycerate + 2 H(+). In terms of biological role, ruBisCO catalyzes two reactions: the carboxylation of D-ribulose 1,5-bisphosphate, the primary event in carbon dioxide fixation, as well as the oxidative fragmentation of the pentose substrate in the photorespiration process. Both reactions occur simultaneously and in competition at the same active site. This chain is Ribulose bisphosphate carboxylase large chain, found in Stegnosperma halimifolium.